The sequence spans 115 residues: NADH-ubiquinone oxidoreductase chain 3 (115 aa).

The next 3 membrane-spanning stretches (helical) occupy residues 3 to 23, 55 to 75, and 84 to 104; these read FVLI…ITFW, FFLV…LLPL, and LPLM…SLAY.

This sequence belongs to the complex I subunit 3 family. In terms of assembly, core subunit of respiratory chain NADH dehydrogenase (Complex I) which is composed of 45 different subunits. Interacts with TMEM186. Interacts with TMEM242.

The protein localises to the mitochondrion inner membrane. The catalysed reaction is a ubiquinone + NADH + 5 H(+)(in) = a ubiquinol + NAD(+) + 4 H(+)(out). Functionally, core subunit of the mitochondrial membrane respiratory chain NADH dehydrogenase (Complex I) which catalyzes electron transfer from NADH through the respiratory chain, using ubiquinone as an electron acceptor. Essential for the catalytic activity of complex I. The polypeptide is NADH-ubiquinone oxidoreductase chain 3 (Pan troglodytes (Chimpanzee)).